The primary structure comprises 466 residues: Paraneoplastic antigen Ma3 homolog (466 aa).

A disordered region spans residues 379 to 408 (RPYQGSRRRRHRRRGQHRKGGVPRDDSQGT). A compositionally biased stretch (basic residues) spans 384 to 399 (SRRRRHRRRGQHRKGG). The CCHC-type zinc-finger motif lies at 415 to 432 (TFCYSCGEDGHIRVHCFN). A disordered region spans residues 441–466 (QKRQAAMEKGNRSWAWEKSHPKPKTK). Positions 445–460 (AAMEKGNRSWAWEKSH) are enriched in basic and acidic residues.

Belongs to the PNMA family. As to expression, expressed in the cerebrum and cerebellum.

The protein localises to the nucleus. It is found in the nucleolus. This is Paraneoplastic antigen Ma3 homolog (Pnma3) from Mus musculus (Mouse).